Reading from the N-terminus, the 286-residue chain is MKNRLFDMLIYGFLLMFALICVLPFIHVIAASFATVEEVVSKKFILIPTTFSLDAYRYIFSTDIIYKSLLVSVFVTVIGTAVSMFLSSLMAYGLSRRDLIGRQPLMFLVVFTMLFSGGMIPTFLVVKSLGLLDSYWALILPTAINAFNLIILKNFFQNIPSSLEESAKIDGCNDLGIFFKIVLPLSLPAIATISLFYAVTYWNTYMTAILYLNDSAKWPIQVLLRQIVIVSSGMQGDMSEMGSGSPPPEQTIKMAVIVVATIPVLLVYPFIQKHFAKGALLGSVKG.

6 helical membrane-spanning segments follow: residues 9–29 (LIYG…IHVI), 69–89 (LLVS…LSSL), 106–126 (MFLV…FLVV), 131–151 (LLDS…NLII), 176–196 (GIFF…ISLF), and 251–271 (TIKM…YPFI). Residues 69–271 (LLVSVFVTVI…IPVLLVYPFI (203 aa)) enclose the ABC transmembrane type-1 domain.

This sequence belongs to the binding-protein-dependent transport system permease family. CysTW subfamily. The complex is probably composed of two ATP-binding proteins (MsmX), two transmembrane proteins (YtcP and YteP) and a solute-binding protein (YtcQ).

The protein localises to the cell membrane. Involved in pectin degradation. Part of the ABC transporter complex YtcQP-YteP involved in the uptake of polygalacturonan and rhamnogalacturonan type I. Responsible for the translocation of the substrate across the membrane. This Bacillus subtilis (strain 168) protein is Polygalacturonan/rhamnogalacturonan transport system permease protein YtcP (ytcP).